The chain runs to 237 residues: MNEFFRDDIFNRPQNVVDFRFDERTAAVFPDMIHRSIPAYASLLHMLGVIAGTYVQEGDHIYDLGCSLGGATLSLSRFIPKTAHITAVDSSPAMVQRFRAYVEGAALHHIEVLEADIIHLPLKSSRVIVMNFVLQFIPPPARDALIAKIYQALTEGGILLLAEKTQPEDDLLRTWHEAFKASQGYSALAIAQKREALENVMKIETETAERVRLQAAGFRRVLPYFQGMMFKAWVAIK.

Residues Tyr-40, 65–67 (GCS), 116–117 (DI), Asn-131, and Arg-194 contribute to the S-adenosyl-L-methionine site.

The protein belongs to the class I-like SAM-binding methyltransferase superfamily. Cx-SAM synthase family. In terms of assembly, homodimer.

The enzyme catalyses prephenate + S-adenosyl-L-methionine = carboxy-S-adenosyl-L-methionine + 3-phenylpyruvate + H2O. Its function is as follows. Catalyzes the conversion of S-adenosyl-L-methionine (SAM) to carboxy-S-adenosyl-L-methionine (Cx-SAM). This is Carboxy-S-adenosyl-L-methionine synthase from Dichelobacter nodosus (strain VCS1703A).